An 84-amino-acid chain; its full sequence is Small ribosomal subunit protein uS17 (84 aa).

It belongs to the universal ribosomal protein uS17 family. Part of the 30S ribosomal subunit.

One of the primary rRNA binding proteins, it binds specifically to the 5'-end of 16S ribosomal RNA. In Klebsiella pneumoniae subsp. pneumoniae (strain ATCC 700721 / MGH 78578), this protein is Small ribosomal subunit protein uS17.